Consider the following 218-residue polypeptide: ATP phosphoribosyltransferase (218 aa).

It belongs to the ATP phosphoribosyltransferase family. Short subfamily. In terms of assembly, heteromultimer composed of HisG and HisZ subunits.

It localises to the cytoplasm. The enzyme catalyses 1-(5-phospho-beta-D-ribosyl)-ATP + diphosphate = 5-phospho-alpha-D-ribose 1-diphosphate + ATP. The protein operates within amino-acid biosynthesis; L-histidine biosynthesis; L-histidine from 5-phospho-alpha-D-ribose 1-diphosphate: step 1/9. Its function is as follows. Catalyzes the condensation of ATP and 5-phosphoribose 1-diphosphate to form N'-(5'-phosphoribosyl)-ATP (PR-ATP). Has a crucial role in the pathway because the rate of histidine biosynthesis seems to be controlled primarily by regulation of HisG enzymatic activity. The protein is ATP phosphoribosyltransferase of Trichormus variabilis (strain ATCC 29413 / PCC 7937) (Anabaena variabilis).